A 252-amino-acid chain; its full sequence is 5'-nucleotidase SurE (252 aa).

Residues D8, D9, S42, and N94 each coordinate a divalent metal cation.

Belongs to the SurE nucleotidase family. A divalent metal cation serves as cofactor.

Its subcellular location is the cytoplasm. It carries out the reaction a ribonucleoside 5'-phosphate + H2O = a ribonucleoside + phosphate. Nucleotidase that shows phosphatase activity on nucleoside 5'-monophosphates. In Ehrlichia ruminantium (strain Gardel), this protein is 5'-nucleotidase SurE.